The primary structure comprises 100 residues: Large ribosomal subunit protein uL23 (100 aa).

Belongs to the universal ribosomal protein uL23 family. As to quaternary structure, part of the 50S ribosomal subunit. Contacts protein L29, and trigger factor when it is bound to the ribosome.

In terms of biological role, one of the early assembly proteins it binds 23S rRNA. One of the proteins that surrounds the polypeptide exit tunnel on the outside of the ribosome. Forms the main docking site for trigger factor binding to the ribosome. The sequence is that of Large ribosomal subunit protein uL23 from Thermotoga maritima (strain ATCC 43589 / DSM 3109 / JCM 10099 / NBRC 100826 / MSB8).